Consider the following 443-residue polypeptide: Transcriptional regulatory protein ZraR (443 aa).

The 115-residue stretch at 7–121 (DILVVDDDIS…KLQLTLSEAL (115 aa)) folds into the Response regulatory domain. Residue D56 is modified to 4-aspartylphosphate. Residues 141–370 (MVGDSPAMRA…LENAVERAVV (230 aa)) enclose the Sigma-54 factor interaction domain. ATP contacts are provided by G172, T173, R329, and R359. Positions 423-442 (KTEAARRLGITRKTLLAKLS) form a DNA-binding region, H-T-H motif.

In terms of processing, phosphorylated by ZraS.

Its subcellular location is the cytoplasm. With respect to regulation, activity of the ZraS/ZraR two-component system is repressed by the zinc-bound form of ZraP, which probably interacts with the periplasmic region of ZraS. Its function is as follows. Part of the Zra signaling pathway, an envelope stress response (ESR) system composed of the periplasmic accessory protein ZraP, the histidine kinase ZraS and the transcriptional regulator ZraR. The ZraPSR system contributes to antibiotic resistance and is important for membrane integrity in the presence of membrane-targeting biocides. ZraR is a member of the two-component regulatory system ZraS/ZraR. When activated by ZraS, acts in conjunction with sigma-54 to regulate the expression of zraP in the presence of high Zn(2+) or Pb(2+) concentrations. Also positively autoregulates the expression of the zraSR operon. The protein is Transcriptional regulatory protein ZraR (zraR) of Klebsiella oxytoca.